We begin with the raw amino-acid sequence, 150 residues long: Urease subunit beta (150 aa).

The span at 122-140 (GAVVGDSPAATPGTTGATG) shows a compositional bias: low complexity. The tract at residues 122-150 (GAVVGDSPAATPGTTGATGDLPGYLGEGS) is disordered.

It belongs to the urease beta subunit family. In terms of assembly, heterotrimer of UreA (gamma), UreB (beta) and UreC (alpha) subunits. Three heterotrimers associate to form the active enzyme.

Its subcellular location is the cytoplasm. It carries out the reaction urea + 2 H2O + H(+) = hydrogencarbonate + 2 NH4(+). It functions in the pathway nitrogen metabolism; urea degradation; CO(2) and NH(3) from urea (urease route): step 1/1. In Frankia alni (strain DSM 45986 / CECT 9034 / ACN14a), this protein is Urease subunit beta.